The primary structure comprises 218 residues: Large ribosomal subunit protein uL4 (218 aa).

Residues 54 to 106 (GTHAVKNRGAVSGGGRKPWKQKGTGRARQGSIRAPQWYHGGVAHGPVPRDYSQ) form a disordered region.

This sequence belongs to the universal ribosomal protein uL4 family. In terms of assembly, part of the 50S ribosomal subunit.

Functionally, one of the primary rRNA binding proteins, this protein initially binds near the 5'-end of the 23S rRNA. It is important during the early stages of 50S assembly. It makes multiple contacts with different domains of the 23S rRNA in the assembled 50S subunit and ribosome. Its function is as follows. Forms part of the polypeptide exit tunnel. This is Large ribosomal subunit protein uL4 from Bifidobacterium animalis subsp. lactis (strain AD011).